The chain runs to 128 residues: Otoraplin (128 aa).

The N-terminal stretch at 1–18 (MARILILLLGGLVVLCAG) is a signal peptide. 2 cysteine pairs are disulfide-bonded: Cys32/Cys37 and Cys55/Cys127. Residues 39-110 (YTISLARAQE…PSNLVKEQRV (72 aa)) form the SH3 domain.

It belongs to the MIA/OTOR family. Highly expressed in cochlea.

Its subcellular location is the secreted. The sequence is that of Otoraplin (Otor) from Mus musculus (Mouse).